Reading from the N-terminus, the 544-residue chain is Light-independent protochlorophyllide reductase subunit B (544 aa).

[4Fe-4S] cluster is bound at residue D36. D286 functions as the Proton donor in the catalytic mechanism. 421–422 (GM) provides a ligand contact to substrate.

The protein belongs to the ChlB/BchB/BchZ family. Protochlorophyllide reductase is composed of three subunits; BchL, BchN and BchB. Forms a heterotetramer of two BchB and two BchN subunits. The cofactor is [4Fe-4S] cluster.

The enzyme catalyses chlorophyllide a + oxidized 2[4Fe-4S]-[ferredoxin] + 2 ADP + 2 phosphate = protochlorophyllide a + reduced 2[4Fe-4S]-[ferredoxin] + 2 ATP + 2 H2O. It participates in porphyrin-containing compound metabolism; bacteriochlorophyll biosynthesis (light-independent). Component of the dark-operative protochlorophyllide reductase (DPOR) that uses Mg-ATP and reduced ferredoxin to reduce ring D of protochlorophyllide (Pchlide) to form chlorophyllide a (Chlide). This reaction is light-independent. The NB-protein (BchN-BchB) is the catalytic component of the complex. The chain is Light-independent protochlorophyllide reductase subunit B from Chloroflexus aggregans (strain MD-66 / DSM 9485).